We begin with the raw amino-acid sequence, 525 residues long: WD repeat-containing protein JIP5 (525 aa).

5 WD repeats span residues 28–69, 121–160, 211–251, 270–310, and 358–398; these read VFDE…RILN, RHKGSVRGMSFNNDGSKLYTIGIDNVLKKANSLTGKVMKK, HNGD…ESDA, QEDE…LVDQ, and RKHS…DDEE. The disordered stretch occupies residues 396–525; the sequence is DEEGKINESY…EHGIRKFEGL (130 aa). The segment covering 410–424 has biased composition (acidic residues); it reads SDNDNGFDSDADSNS. A compositionally biased stretch (low complexity) spans 425–435; it reads DSESVSSSDVD. Residues 463-484 show a composition bias toward basic and acidic residues; the sequence is SKDELLAELEKDLQSSDEDSKH. Basic residues predominate over residues 485 to 501; sequence YTKRTKSTQPKKLKKQK. Residues 513–525 are compositionally biased toward basic and acidic residues; that stretch reads QKHEHGIRKFEGL.

The protein belongs to the WD repeat WDR55 family.

It is found in the nucleus. Its subcellular location is the nucleolus. This is WD repeat-containing protein JIP5 (JIP5) from Kluyveromyces lactis (strain ATCC 8585 / CBS 2359 / DSM 70799 / NBRC 1267 / NRRL Y-1140 / WM37) (Yeast).